The sequence spans 356 residues: Myricetin 7/4'-O-methyltransferase 2 (356 aa).

D222 contacts S-adenosyl-L-methionine. H260 acts as the Proton acceptor in catalysis.

It belongs to the class I-like SAM-binding methyltransferase superfamily. Cation-independent O-methyltransferase family. As to quaternary structure, homodimer.

It catalyses the reaction quercetin + S-adenosyl-L-methionine = rhamnetin + S-adenosyl-L-homocysteine + H(+). The enzyme catalyses kaempferol + S-adenosyl-L-methionine = kaempferide + S-adenosyl-L-homocysteine + H(+). The catalysed reaction is myricetin + S-adenosyl-L-methionine = 7-O-methylmyricetin + S-adenosyl-L-homocysteine + H(+). It carries out the reaction kaempferide + S-adenosyl-L-methionine = 7,4'-O-dimethylkaempferol + S-adenosyl-L-homocysteine + H(+). It catalyses the reaction isorhamnetin + S-adenosyl-L-methionine = 3',4'-O-dimethylquercetin + S-adenosyl-L-homocysteine + 2 H(+). The enzyme catalyses 3',4',5,7-tetrahydroxy-3-methoxyflavone + S-adenosyl-L-methionine = 3',4',5-trihydroxy-3,7-dimethoxyflavone + S-adenosyl-L-homocysteine + H(+). The catalysed reaction is rhamnetin + S-adenosyl-L-methionine = 7,4'-O-dimethylquercetin + S-adenosyl-L-homocysteine + H(+). It carries out the reaction syringetin + S-adenosyl-L-methionine = 7,3',5'-O-trimethylmyricetin + S-adenosyl-L-homocysteine + H(+). It catalyses the reaction 3',4',5'-O-trimethylmyricetin + S-adenosyl-L-methionine = 7,3',4',5'-O-tetramethylmyricetin + S-adenosyl-L-homocysteine. It functions in the pathway flavonoid metabolism. Flavonoid 7/4'-O-methyltransferase involved in the biosynthesis of polymethoxylated flavonoids natural products such as myricetin derivatives, aroma compounds possessing antioxidant properties and exhibiting pharmacological activities such as anti-carcinogen, anti-viral, anti-thrombotic, anti-diabetic, anti-atherosclerotic, and anti-inflammatory effects. Catalyzes S-adenosylmethionine-dependent regioselective 7/4'-O-methylation of flavonoids; active on various hydroxylated flavonoid substrates. In Solanum lycopersicum (Tomato), this protein is Myricetin 7/4'-O-methyltransferase 2.